The following is a 987-amino-acid chain: Kinesin-like protein KIN-14G (987 aa).

One can recognise a Calponin-homology (CH) domain in the interval 44–163 (SLRRYEAAGW…CILALKSYSE (120 aa)). Residues 201-221 (ISRTQSTDMLSTDQPLSSDGD) are disordered. Positions 394 to 721 (NIRVYCRVRP…LKFAERVGSV (328 aa)) constitute a Kinesin motor domain. 478–485 (GQTGSGKT) provides a ligand contact to ATP. The stretch at 725-754 (AARVNKDNSEVKELKEQIANLKMALVRKGN) forms a coiled coil. 2 disordered regions span residues 759–849 (QPTA…ESKS) and 927–987 (NIQN…SLGT). The span at 788–797 (MGNTSNNSRP) shows a compositional bias: polar residues. Positions 840–849 (GKDEDRESKS) are enriched in basic and acidic residues. Over residues 964 to 974 (PPNTVNSQPQR) the composition is skewed to polar residues.

This sequence belongs to the TRAFAC class myosin-kinesin ATPase superfamily. Kinesin family. KIN-14 subfamily. In terms of assembly, monomer. As to expression, flower specific.

It is found in the cytoplasm. The protein resides in the cytoskeleton. In terms of biological role, microtubule-binding motor protein. The sequence is that of Kinesin-like protein KIN-14G from Arabidopsis thaliana (Mouse-ear cress).